Reading from the N-terminus, the 841-residue chain is Taste receptor type 1 member 1 (841 aa).

A signal peptide spans 1–20 (MLLCTARLVGLQLLISCCWA). Residues 21–567 (FACHSTESSP…VFLALREHTS (547 aa)) lie on the Extracellular side of the membrane. N-linked (GlcNAc...) asparagine glycans are attached at residues N87, N88, N95, N291, N479, and N529. Residues 568–588 (WVLLAANTLLLLLLLGTAGLF) form a helical membrane-spanning segment. At 589 to 603 (AWHLDTPVVRSAGGR) the chain is on the cytoplasmic side. The helical transmembrane segment at 604–624 (LCFLMLGSLAAGSGSLYGFFG) threads the bilayer. Residues 625 to 639 (EPTRPACLLRQALFA) are Extracellular-facing. A helical membrane pass occupies residues 640–660 (LGFTIFLSCLTVRSFQLIIIF). Over 661-680 (KFSTKVPTFYHAWVQNHGAG) the chain is Cytoplasmic. Residues 681-701 (LFVMISSAAQLLICLTWLVVW) traverse the membrane as a helical segment. Over 702-725 (TPLPAREYQRFPHLVMLECTETNS) the chain is Extracellular. The chain crosses the membrane as a helical span at residues 726-746 (LGFILAFLYNGLLSISAFACS). Over 747–761 (YLGKDLPENYNEAKC) the chain is Cytoplasmic. The helical transmembrane segment at 762–782 (VTFSLLFNFVSWIAFFTTASV) threads the bilayer. The Extracellular segment spans residues 783-795 (YDGKYLPAANMMA). The helical transmembrane segment at 796-816 (GLSSLSSGFGGYFLPKCYVIL) threads the bilayer. The Cytoplasmic portion of the chain corresponds to 817-841 (CRPDLNSTEHFQASIQDYTRRCGST).

Belongs to the G-protein coupled receptor 3 family. TAS1R subfamily. Forms heterodimers with TAS1R3.

The protein resides in the cell membrane. Putative taste receptor. TAS1R1/TAS1R3 responds to the umami taste stimulus (the taste of monosodium glutamate). Sequence differences within and between species can significantly influence the selectivity and specificity of taste responses. In Homo sapiens (Human), this protein is Taste receptor type 1 member 1 (TAS1R1).